Here is a 160-residue protein sequence, read N- to C-terminus: Competence protein ComGD (160 aa).

The chain crosses the membrane as a helical span at residues 30-50 (AFTMLESLLVLGLVSILALGL).

The transformation pili are flexible filaments, consisting mainly of the major pilin ComGC and smaller amounts of the minor pilins, including at least ComGD, ComGF and ComGG, and perhaps ComGE. Interacts with ComGE. Interacts with ComGF. Interacts with ComGG.

The protein localises to the cell membrane. The protein resides in the cell surface. It localises to the fimbrium. In terms of biological role, required for formation of the type IV-like pilus (T4P) that plays a role in transformation. Transformation pili are dynamically extended and retracted, perhaps thereby promoting DNA uptake and transformation. Involved in transformation. Required for DNA binding. This is Competence protein ComGD from Streptococcus pneumoniae (strain ATCC BAA-255 / R6).